Here is a 140-residue protein sequence, read N- to C-terminus: Histone H2B (140 aa).

Over residues 1-10 (MPPKAAEKKP) the composition is skewed to basic and acidic residues. The segment at 1-48 (MPPKAAEKKPTTGGKAPAGKAPAEKKEAGKKTAAAASGDKKKRGKTRK) is disordered. N6-acetyllysine; alternate is present on residues Lys8 and Lys9. Glycyl lysine isopeptide (Lys-Gly) (interchain with G-Cter in SUMO); alternate cross-links involve residues Lys8 and Lys9. Low complexity predominate over residues 11 to 21 (TTGGKAPAGKA). Lys15 is subject to N6-acetyllysine. Position 25 is an N6-acetyllysine; alternate (Lys25). Residue Lys25 forms a Glycyl lysine isopeptide (Lys-Gly) (interchain with G-Cter in SUMO); alternate linkage. Lys26 is covalently cross-linked (Glycyl lysine isopeptide (Lys-Gly) (interchain with G-Cter in SUMO)). Lys134 is covalently cross-linked (Glycyl lysine isopeptide (Lys-Gly) (interchain with G-Cter in ubiquitin)).

Belongs to the histone H2B family. In terms of assembly, the nucleosome is a histone octamer containing two molecules each of H2A, H2B, H3 and H4 assembled in one H3-H4 heterotetramer and two H2A-H2B heterodimers. The octamer wraps approximately 147 bp of DNA. In terms of processing, monoubiquitinated by the ubc2-bre1 complex to form H2BK123ub1. H2BK123ub1 gives a specific tag for epigenetic transcriptional activation and is also prerequisite for H3K4me and H3K79me formation. H2BK123ub1 also modulates the formation of double-strand breaks during meiosis and is a prerequisite for DNA-damage checkpoint activation. Post-translationally, acetylated by gcn5 to form H2BK11ac and H2BK16ac. H2BK16ac can also be formed by esa1. Acetylation of N-terminal lysines and particularly formation of H2BK11acK16ac has a positive effect on transcription. Sumoylation to form H2BK6su or H2BK7su, and probably also H2BK16su or H2BK17su, occurs preferentially near the telomeres and represses gene transcription.

It localises to the nucleus. The protein resides in the chromosome. In terms of biological role, core component of nucleosome. Nucleosomes wrap and compact DNA into chromatin, limiting DNA accessibility to the cellular machineries which require DNA as a template. Histones thereby play a central role in transcription regulation, DNA repair, DNA replication and chromosomal stability. DNA accessibility is regulated via a complex set of post-translational modifications of histones, also called histone code, and nucleosome remodeling. This Aspergillus terreus (strain NIH 2624 / FGSC A1156) protein is Histone H2B (htb1).